The following is a 358-amino-acid chain: Membrane-bound lytic murein transglycosylase C (358 aa).

The signal sequence occupies residues 1–16 (MKKILALLVIAPLLIS). A lipid anchor (N-palmitoyl cysteine) is attached at C17. C17 carries the S-diacylglycerol cysteine lipid modification.

The protein belongs to the transglycosylase Slt family.

The protein resides in the cell outer membrane. The catalysed reaction is Exolytic cleavage of the (1-&gt;4)-beta-glycosidic linkage between N-acetylmuramic acid (MurNAc) and N-acetylglucosamine (GlcNAc) residues in peptidoglycan, from either the reducing or the non-reducing ends of the peptidoglycan chains, with concomitant formation of a 1,6-anhydrobond in the MurNAc residue.. Its function is as follows. Murein-degrading enzyme. May play a role in recycling of muropeptides during cell elongation and/or cell division. The polypeptide is Membrane-bound lytic murein transglycosylase C (Serratia proteamaculans (strain 568)).